The chain runs to 271 residues: Probable short-chain type dehydrogenase/reductase VdlC (271 aa).

Residue 1-25 (MAVITGASSGIGLECVLMLLNQGYK) coordinates NAD(+). Ser-129 lines the substrate pocket. Tyr-142 functions as the Proton acceptor in the catalytic mechanism.

This sequence belongs to the short-chain dehydrogenases/reductases (SDR) family.

The chain is Probable short-chain type dehydrogenase/reductase VdlC (vdlC) from Helicobacter pylori (strain J99 / ATCC 700824) (Campylobacter pylori J99).